A 1237-amino-acid polypeptide reads, in one-letter code: Cilia- and flagella-associated protein 61 (1237 aa).

Residues 278 to 301 (QDLSVRRSQDAELRSSSQGSQKIV) form a disordered region. Basic and acidic residues predominate over residues 281-290 (SVRRSQDAEL).

Component of axonemal radial spokes, the protein complexes that link the outer microtubule doublets with the central pair of microtubules. Interacts with CFAP91/MAATS1, ODAD2/ARMC4, RSPH3A, ROPN1, ROPN1L and RSPH9. Interacts with DYNLT1, DYNC1I2 and TUBB3. Interacts with WDR35, IFT22 and IFT81.

It localises to the cytoplasm. It is found in the cytoskeleton. The protein resides in the flagellum axoneme. Involved in sperm flagellum assembly. Plays an essential role in the formation of the radial spokes in flagellum axoneme. The sequence is that of Cilia- and flagella-associated protein 61 from Homo sapiens (Human).